Reading from the N-terminus, the 360-residue chain is Photosystem II protein D1 (360 aa).

3 helical membrane passes run 29 to 46 (YIGWFGVLMIPTLLAATA), 118 to 133 (HFLLGCACYLGRQWEL), and 142 to 156 (WICVAYSAPLASATA). Position 118 (histidine 118) interacts with chlorophyll a. Tyrosine 126 is a binding site for pheophytin a. Positions 170 and 189 each coordinate [CaMn4O5] cluster. A helical transmembrane segment spans residues 197–218 (FHMLGVAGVFGGSLFSAMHGSL). A chlorophyll a-binding site is contributed by histidine 198. Residues histidine 215 and 264-265 (SF) each bind a quinone. Residue histidine 215 participates in Fe cation binding. Position 272 (histidine 272) interacts with Fe cation. A helical transmembrane segment spans residues 274–288 (FLAAWPVVGIWFTAL). Histidine 332, glutamate 333, aspartate 342, and alanine 344 together coordinate [CaMn4O5] cluster. Positions 345-360 (AGEVAPVALTAPAING) are excised as a propeptide.

The protein belongs to the reaction center PufL/M/PsbA/D family. As to quaternary structure, PSII is composed of 1 copy each of membrane proteins PsbA, PsbB, PsbC, PsbD, PsbE, PsbF, PsbH, PsbI, PsbJ, PsbK, PsbL, PsbM, PsbT, PsbX, PsbY, PsbZ, Psb30/Ycf12, peripheral proteins PsbO, CyanoQ (PsbQ), PsbU, PsbV and a large number of cofactors. It forms dimeric complexes. The D1/D2 heterodimer binds P680, chlorophylls that are the primary electron donor of PSII, and subsequent electron acceptors. It shares a non-heme iron and each subunit binds pheophytin, quinone, additional chlorophylls, carotenoids and lipids. D1 provides most of the ligands for the Mn4-Ca-O5 cluster of the oxygen-evolving complex (OEC). There is also a Cl(-1) ion associated with D1 and D2, which is required for oxygen evolution. The PSII complex binds additional chlorophylls, carotenoids and specific lipids. is required as a cofactor. Post-translationally, tyr-161 forms a radical intermediate that is referred to as redox-active TyrZ, YZ or Y-Z. In terms of processing, C-terminally processed by CtpA; processing is essential to allow assembly of the oxygen-evolving complex and thus photosynthetic growth.

The protein localises to the cellular thylakoid membrane. It catalyses the reaction 2 a plastoquinone + 4 hnu + 2 H2O = 2 a plastoquinol + O2. Its function is as follows. Photosystem II (PSII) is a light-driven water:plastoquinone oxidoreductase that uses light energy to abstract electrons from H(2)O, generating O(2) and a proton gradient subsequently used for ATP formation. It consists of a core antenna complex that captures photons, and an electron transfer chain that converts photonic excitation into a charge separation. The D1/D2 (PsbA/PsbD) reaction center heterodimer binds P680, the primary electron donor of PSII as well as several subsequent electron acceptors. This chain is Photosystem II protein D1, found in Microchaete diplosiphon (Fremyella diplosiphon).